The primary structure comprises 255 residues: ATP synthase subunit a (255 aa).

6 helical membrane-spanning segments follow: residues 40 to 60 (TEPI…ASEV), 109 to 129 (LIGG…IPGV), 135 to 155 (NLNI…YYGL), 163 to 183 (VAHL…IEVI), 196 to 218 (LMLN…ALFV), and 230 to 250 (IVVQ…LATE).

The protein belongs to the ATPase A chain family. In terms of assembly, F-type ATPases have 2 components, CF(1) - the catalytic core - and CF(0) - the membrane proton channel. CF(1) has five subunits: alpha(3), beta(3), gamma(1), delta(1), epsilon(1). CF(0) has three main subunits: a(1), b(2) and c(9-12). The alpha and beta chains form an alternating ring which encloses part of the gamma chain. CF(1) is attached to CF(0) by a central stalk formed by the gamma and epsilon chains, while a peripheral stalk is formed by the delta and b chains.

Its subcellular location is the cell inner membrane. Its function is as follows. Key component of the proton channel; it plays a direct role in the translocation of protons across the membrane. The protein is ATP synthase subunit a of Sorangium cellulosum (strain So ce56) (Polyangium cellulosum (strain So ce56)).